The chain runs to 253 residues: ATP synthase subunit b 1 (253 aa).

A helical transmembrane segment spans residues G5 to Y27.

It belongs to the ATPase B chain family. As to quaternary structure, F-type ATPases have 2 components, F(1) - the catalytic core - and F(0) - the membrane proton channel. F(1) has five subunits: alpha(3), beta(3), gamma(1), delta(1), epsilon(1). F(0) has three main subunits: a(1), b(2) and c(10-14). The alpha and beta chains form an alternating ring which encloses part of the gamma chain. F(1) is attached to F(0) by a central stalk formed by the gamma and epsilon chains, while a peripheral stalk is formed by the delta and b chains.

It localises to the cell inner membrane. F(1)F(0) ATP synthase produces ATP from ADP in the presence of a proton or sodium gradient. F-type ATPases consist of two structural domains, F(1) containing the extramembraneous catalytic core and F(0) containing the membrane proton channel, linked together by a central stalk and a peripheral stalk. During catalysis, ATP synthesis in the catalytic domain of F(1) is coupled via a rotary mechanism of the central stalk subunits to proton translocation. Functionally, component of the F(0) channel, it forms part of the peripheral stalk, linking F(1) to F(0). This is ATP synthase subunit b 1 from Rhodospirillum centenum (strain ATCC 51521 / SW).